The chain runs to 220 residues: Ribose-5-phosphate isomerase A (220 aa).

Substrate-binding positions include Thr28–Thr31, Asp81–Asp84, and Lys94–Gly97. The active-site Proton acceptor is the Glu103. Lys121 lines the substrate pocket.

This sequence belongs to the ribose 5-phosphate isomerase family. As to quaternary structure, homodimer.

The enzyme catalyses aldehydo-D-ribose 5-phosphate = D-ribulose 5-phosphate. Its pathway is carbohydrate degradation; pentose phosphate pathway; D-ribose 5-phosphate from D-ribulose 5-phosphate (non-oxidative stage): step 1/1. In terms of biological role, catalyzes the reversible conversion of ribose-5-phosphate to ribulose 5-phosphate. In Shewanella sp. (strain W3-18-1), this protein is Ribose-5-phosphate isomerase A.